The primary structure comprises 391 residues: Phosphoglycerate kinase (391 aa).

Substrate is bound by residues 19–21 (DYN), arginine 35, 58–61 (HMGR), arginine 117, and arginine 150. ATP-binding positions include lysine 201, glutamate 323, and 349 to 352 (GGDT).

It belongs to the phosphoglycerate kinase family. Monomer.

The protein resides in the cytoplasm. It carries out the reaction (2R)-3-phosphoglycerate + ATP = (2R)-3-phospho-glyceroyl phosphate + ADP. It participates in carbohydrate degradation; glycolysis; pyruvate from D-glyceraldehyde 3-phosphate: step 2/5. This Desulforapulum autotrophicum (strain ATCC 43914 / DSM 3382 / VKM B-1955 / HRM2) (Desulfobacterium autotrophicum) protein is Phosphoglycerate kinase.